Consider the following 794-residue polypeptide: Lon protease (794 aa).

The region spanning 13 to 204 (VPLYPLREII…KVYMHLTNEV (192 aa)) is the Lon N-terminal domain. Residue 356–363 (GPPGVGKT) participates in ATP binding. In terms of domain architecture, Lon proteolytic spans 592–773 (KDRVGVATGL…REVFVQALNP (182 aa)). Active-site residues include serine 679 and lysine 722. Positions 774 to 788 (TSPAPTAATSARTPA) are enriched in low complexity. Residues 774-794 (TSPAPTAATSARTPAGAPPPQ) form a disordered region.

Belongs to the peptidase S16 family. In terms of assembly, homohexamer. Organized in a ring with a central cavity.

The protein localises to the cytoplasm. The enzyme catalyses Hydrolysis of proteins in presence of ATP.. Its function is as follows. ATP-dependent serine protease that mediates the selective degradation of mutant and abnormal proteins as well as certain short-lived regulatory proteins. Required for cellular homeostasis and for survival from DNA damage and developmental changes induced by stress. Degrades polypeptides processively to yield small peptide fragments that are 5 to 10 amino acids long. Binds to DNA in a double-stranded, site-specific manner. This chain is Lon protease, found in Citrifermentans bemidjiense (strain ATCC BAA-1014 / DSM 16622 / JCM 12645 / Bem) (Geobacter bemidjiensis).